The primary structure comprises 444 residues: Glutamate dehydrogenase (444 aa).

K124 is an active-site residue.

This sequence belongs to the Glu/Leu/Phe/Val dehydrogenases family. In terms of assembly, homohexamer.

It carries out the reaction L-glutamate + NAD(+) + H2O = 2-oxoglutarate + NH4(+) + NADH + H(+). The catalysed reaction is L-glutamate + NADP(+) + H2O = 2-oxoglutarate + NH4(+) + NADPH + H(+). This is Glutamate dehydrogenase (gdhA) from Bacteroides thetaiotaomicron (strain ATCC 29148 / DSM 2079 / JCM 5827 / CCUG 10774 / NCTC 10582 / VPI-5482 / E50).